Reading from the N-terminus, the 230-residue chain is tRNA (guanine-N(7)-)-methyltransferase (230 aa).

4 residues coordinate S-adenosyl-L-methionine: glutamate 61, glutamate 86, aspartate 113, and aspartate 135. The active site involves aspartate 135. Residues lysine 139, aspartate 171, and 209–212 (TRYE) contribute to the substrate site.

It belongs to the class I-like SAM-binding methyltransferase superfamily. TrmB family.

It catalyses the reaction guanosine(46) in tRNA + S-adenosyl-L-methionine = N(7)-methylguanosine(46) in tRNA + S-adenosyl-L-homocysteine. Its pathway is tRNA modification; N(7)-methylguanine-tRNA biosynthesis. In terms of biological role, catalyzes the formation of N(7)-methylguanine at position 46 (m7G46) in tRNA. The protein is tRNA (guanine-N(7)-)-methyltransferase of Rhizobium etli (strain ATCC 51251 / DSM 11541 / JCM 21823 / NBRC 15573 / CFN 42).